Reading from the N-terminus, the 283-residue chain is Non-selective voltage-gated ion channel VDAC1 (283 aa).

A2 carries the post-translational modification N-acetylalanine. K12 is a binding site for ATP. K12 is covalently cross-linked (Glycyl lysine isopeptide (Lys-Gly) (interchain with G-Cter in ubiquitin)). S13 is subject to Phosphoserine. The residue at position 19 (T19) is a Phosphothreonine. Position 20 (K20) interacts with ATP. K20 bears the N6-acetyllysine; alternate mark. K20 bears the N6-succinyllysine; alternate mark. K20 participates in a covalent cross-link: Glycyl lysine isopeptide (Lys-Gly) (interchain with G-Cter in ubiquitin); alternate. Transmembrane regions (beta stranded) follow at residues L26–S35 and L39–A47. Glycyl lysine isopeptide (Lys-Gly) (interchain with G-Cter in ubiquitin) cross-links involve residues K53 and K61. A beta stranded transmembrane segment spans residues V54–W64. Y67 carries the post-translational modification Phosphotyrosine. The next 3 beta stranded transmembrane spans lie at L69–N76, T80–D89, and L95–S104. T107 bears the Phosphothreonine mark. At K109 the chain carries N6-acetyllysine; alternate. Residue K109 forms a Glycyl lysine isopeptide (Lys-Gly) (interchain with G-Cter in ubiquitin); alternate linkage. K110 is covalently cross-linked (Glycyl lysine isopeptide (Lys-Gly) (interchain with G-Cter in ubiquitin)). Beta stranded transmembrane passes span N111 to R120, I123 to D130, S137 to G145, and L150 to E158. A Phosphoserine modification is found at S137. A Glycyl lysine isopeptide (Lys-Gly) (interchain with G-Cter in ubiquitin) cross-link involves residue K161. A run of 6 beta stranded transmembrane segments spans residues R163 to T175, F178 to N185, E189 to V198, L202 to T211, R218 to V227, and A231 to N238. Residue S193 is modified to Phosphoserine; by NEK1. Phosphoserine is present on S240. L242 to G244 contributes to the NAD(+) binding site. A beta stranded transmembrane segment spans residues L242 to L251. Residue K252 is modified to N6-acetyllysine. Residues G254–L263 traverse the membrane as a beta stranded segment. S260–D264 lines the NAD(+) pocket. K266 carries the N6-acetyllysine; alternate modification. Residue K266 forms a Glycyl lysine isopeptide (Lys-Gly) (interchain with G-Cter in ubiquitin); alternate linkage. Residues H273–Q282 form a beta stranded membrane-spanning segment. Residue K274 forms a Glycyl lysine isopeptide (Lys-Gly) (interchain with G-Cter in ubiquitin) linkage.

It belongs to the eukaryotic mitochondrial porin family. As to quaternary structure, homodimer and homotrimer; in response to cyclic AMP or calcium; oligomerization is required for scramblase activity. Component of the mitochondrial permeability transition pore complex (mPTPC), at least composed of SPG7, VDAC1 and PPIF. Interacts with SPG7, NIPSNAP2 and SLC25A30. Interacts with hexokinases including HK1. The HK1-VDAC1 complex interacts with ATF2. Interacts with BCL2L1. Interacts with BAK1. Interacts with RTL10/BOP (via BH3 domain). Interacts with amyloid-beta and APP; induces VDAC1 dephosphorylation. Interacts with TMEM41B. Interacts with BCAP31. Interacts with HSPA9; this interaction couples ITPR1 to VDAC1. Phosphorylation at Ser-193 by NEK1 promotes the closed conformational state preventing excessive mitochondrial membrane permeability and subsequent apoptotic cell death after injury. Phosphorylation by the AKT-GSK3B axis stabilizes the protein probably by preventing ubiquitin-mediated proteasomal degradation. Post-translationally, ubiquitinated. Undergoes monoubiquitination and polyubiquitination by PRKN; monoubiquitination at Lys-274 inhibits apoptosis, whereas polyubiquitination leads to its degradation and promotes mitophagy. Deubiquitinated by USP30. Widely expressed. High levels in heart and kidney with lower levels in brain and ascitic tumor. Very low levels in liver.

The protein localises to the mitochondrion outer membrane. Its subcellular location is the cell membrane. The protein resides in the membrane raft. The enzyme catalyses Ca(2+)(in) = Ca(2+)(out). The catalysed reaction is Na(+)(in) = Na(+)(out). It catalyses the reaction chloride(in) = chloride(out). It carries out the reaction Mg(2+)(in) = Mg(2+)(out). The enzyme catalyses K(+)(in) = K(+)(out). The catalysed reaction is ATP(in) = ATP(out). It catalyses the reaction L-glutamate(out) = L-glutamate(in). It carries out the reaction dopamine(out) = dopamine(in). The enzyme catalyses acetylcholine(in) = acetylcholine(out). The catalysed reaction is Fe(III)-[cytochrome c](out) = Fe(III)-[cytochrome c](in). It catalyses the reaction a 1,2-diacyl-sn-glycero-3-phosphocholine(in) = a 1,2-diacyl-sn-glycero-3-phosphocholine(out). It carries out the reaction a 1,2-diacyl-sn-glycero-3-phospho-L-serine(in) = a 1,2-diacyl-sn-glycero-3-phospho-L-serine(out). Its activity is regulated as follows. Inhibited by nitric oxide. Voltage-gated ion channel activity is inhibited by lanthanum(3+) and ruthenium red. Mitochondrial calcium transport is inhibited by lanthanum(3+), ruthenium red and Ru360. Its function is as follows. Non-selective voltage-gated ion channel that mediates the transport of anions and cations through the mitochondrion outer membrane and plasma membrane. The channel at the outer mitochondrial membrane allows diffusion of small hydrophilic molecules; in the plasma membrane it is involved in cell volume regulation and apoptosis. It adopts an open conformation at low or zero membrane potential and a closed conformation at potentials above 30-40 mV. The open state has a weak anion selectivity whereas the closed state is cation-selective. Binds various signaling molecules, including the sphingolipid ceramide, the phospholipid phosphatidylcholine, and the sterols cholesterol and oxysterol. In depolarized mitochondria, acts downstream of PRKN and PINK1 to promote mitophagy or prevent apoptosis; polyubiquitination by PRKN promotes mitophagy, while monoubiquitination by PRKN decreases mitochondrial calcium influx which ultimately inhibits apoptosis. May participate in the formation of the permeability transition pore complex (PTPC) responsible for the release of mitochondrial products that triggers apoptosis. May mediate ATP export from cells. Part of a complex composed of HSPA9, ITPR1 and VDAC1 that regulates mitochondrial calcium-dependent apoptosis by facilitating calcium transport from the ER lumen to the mitochondria intermembrane space thus providing calcium for the downstream calcium channel MCU that directly releases it into mitochondria matrix. Functionally, catalyzes the scrambling of phospholipids across the outer mitochondrial membrane; the mechanism is unrelated to channel activity and is capable of translocating both anionic and zwitterionic phospholipids. The polypeptide is Non-selective voltage-gated ion channel VDAC1 (Rattus norvegicus (Rat)).